A 229-amino-acid polypeptide reads, in one-letter code: Large ribosomal subunit protein uL1 (229 aa).

This sequence belongs to the universal ribosomal protein uL1 family. Part of the 50S ribosomal subunit.

Binds directly to 23S rRNA. The L1 stalk is quite mobile in the ribosome, and is involved in E site tRNA release. In terms of biological role, protein L1 is also a translational repressor protein, it controls the translation of the L11 operon by binding to its mRNA. This Clostridium botulinum (strain 657 / Type Ba4) protein is Large ribosomal subunit protein uL1.